Here is a 29-residue protein sequence, read N- to C-terminus: Kalata-B11 (29 aa).

A cross-link (cyclopeptide (Gly-Asp)) is located at residues 1-29; that stretch reads GLPVCGETCFGGTCNTPGCSCTDPICTRD. 3 disulfide bridges follow: C5/C19, C9/C21, and C14/C26.

In terms of processing, this is a cyclic peptide.

In terms of biological role, probably participates in a plant defense mechanism. The chain is Kalata-B11 from Oldenlandia affinis.